We begin with the raw amino-acid sequence, 382 residues long: Pyrimidine monooxygenase RutA (382 aa).

FMN-binding positions include 68-69, Asn-134, Glu-143, 159-160, and Ser-209; these read IK and RY.

Belongs to the NtaA/SnaA/DszA monooxygenase family. RutA subfamily.

It catalyses the reaction uracil + FMNH2 + NADH + O2 = (Z)-3-ureidoacrylate + FMN + NAD(+) + H2O + H(+). The enzyme catalyses thymine + FMNH2 + NADH + O2 = (Z)-2-methylureidoacrylate + FMN + NAD(+) + H2O + H(+). In terms of biological role, catalyzes the pyrimidine ring opening between N-3 and C-4 by an unusual flavin hydroperoxide-catalyzed mechanism, adding oxygen atoms in the process to yield ureidoacrylate peracid, that immediately reacts with FMN forming ureidoacrylate and FMN-N(5)-oxide. The FMN-N(5)-oxide reacts spontaneously with NADH to produce FMN. Requires the flavin reductase RutF to regenerate FMN in vivo. The polypeptide is Pyrimidine monooxygenase RutA (Escherichia coli (strain K12 / MC4100 / BW2952)).